A 196-amino-acid chain; its full sequence is MSIEVVNESGFDGVNEEALIDVATFVLGEMDVHPDAEATISVVDVATMSDLHVRWMDLEGPTDVMSFPMDELTPGMGRPDAQPFGPAMLGDIILCPEFAAKQAAKAGHDMGHELALLTTHGCLHLLGYDHIEPEDEQEMFALQNELLQDWYTYCARRGVEFQPKPSNAGAFPSAADRAELDKLVPGGGIPAIGEPQ.

Zn(2+) is bound by residues H120, H124, and H130.

Belongs to the endoribonuclease YbeY family. Zn(2+) serves as cofactor.

The protein resides in the cytoplasm. In terms of biological role, single strand-specific metallo-endoribonuclease involved in late-stage 70S ribosome quality control and in maturation of the 3' terminus of the 16S rRNA. This chain is Endoribonuclease YbeY, found in Corynebacterium diphtheriae (strain ATCC 700971 / NCTC 13129 / Biotype gravis).